A 108-amino-acid chain; its full sequence is Evasin P1229 (108 aa).

The first 31 residues, 1-31, serve as a signal peptide directing secretion; it reads MEVRTFAFLQIVVFVALGIQLFAAVTDAADA. Intrachain disulfides connect Cys41–Cys63, Cys45–Cys65, and Cys56–Cys76. Asn44 carries an N-linked (GlcNAc...) asparagine glycan. Positions 88–108 are disordered; the sequence is GDPNNSDLDAATPRHPDASSR. Asn91 is a glycosylation site (N-linked (GlcNAc...) asparagine). The segment covering 99–108 has biased composition (basic and acidic residues); it reads TPRHPDASSR.

Its subcellular location is the secreted. Its function is as follows. Salivary chemokine-binding protein which binds to host chemokines CXCL1 and CXCL8. The sequence is that of Evasin P1229 from Ixodes ricinus (Common tick).